The sequence spans 147 residues: Protein SOB FIVE-LIKE 2 (147 aa).

The SOFL-A motif lies at 18-23; sequence SGWTMY. The disordered stretch occupies residues 32-147; it reads HHSEVVYEEE…ASRVKVSKTK (116 aa). Over residues 37–77 the composition is skewed to acidic residues; that stretch reads VYEEEDDGFSVKEVDDDGDGDEDDDDDDDDDSSNNESDDSM. The short motif at 76-85 is the SOFL-B element; that stretch reads SMTSDASSWP. The span at 78 to 93 shows a compositional bias: polar residues; sequence TSDASSWPSTHQPPRS. Low complexity predominate over residues 96 to 106; it reads NHAAAKNSNAK. Basic and acidic residues predominate over residues 114-131; that stretch reads NRVRDRFSDEGEESELKA.

It belongs to the SOFL plant protein family. In terms of tissue distribution, predominantly expressed in the vascular tissues of seedlings, developing leaves, flowers and siliques, but barely detectable in roots and stems.

It localises to the cytoplasm. Its subcellular location is the nucleus. Its function is as follows. Involved in cytokinin-mediated development. Together with SOFL2, triggers the endogenous content of specific bioactive cytokinins derived from the biosynthetic intermediates trans-zeatin riboside monophosphate (tZRMP) and N(6)-(Delta(2)-isopentenyl)adenosine monophosphate (iPRMP) such as N-glucosides trans-zeatin 7-glucoside (tZ7G), cis-zeatin 7-glucoside (cZ7G) and N(6)-(Delta(2)-isopentenyl)adenine 7-glucoside (iP7G). This Arabidopsis thaliana (Mouse-ear cress) protein is Protein SOB FIVE-LIKE 2.